The chain runs to 78 residues: UPF0270 protein PC1_3850 (78 aa).

It belongs to the UPF0270 family.

This chain is UPF0270 protein PC1_3850, found in Pectobacterium carotovorum subsp. carotovorum (strain PC1).